Reading from the N-terminus, the 258-residue chain is Phosphoprotein ECPP44 (258 aa).

Disordered regions lie at residues 1–25, 46–131, and 148–175; these read MASD…DRGL, EKVQ…PVEV, and KLPG…VDCA. Basic and acidic residues-rich tracts occupy residues 11-25, 46-80, 109-124, and 148-158; these read SVEK…DRGL, EKVQ…EKLH, GLKE…KEED, and KLPGGGKKVEE.

The protein belongs to the plant dehydrin family. In terms of processing, phosphorylated in embryogenic and somatic embryos. Not phosphorylated in non-embryogenic cells.

Functionally, phosphorylation of ECCP44 protein is thought to be involved in the acquisition of embryogenic competence. Unlike other dehydrins, it is not thought to function as an environmental stress tolerant. This Daucus carota (Wild carrot) protein is Phosphoprotein ECPP44 (ECPP44).